We begin with the raw amino-acid sequence, 78 residues long: Pancreatic polypeptide prohormone (78 aa).

A signal peptide spans 1–19 (LLLSTCVALLLQPPLGALG). Tyr55 bears the Tyrosine amide mark.

Belongs to the NPY family.

Its subcellular location is the secreted. Functionally, hormone secreted by pancreatic cells that acts as a regulator of pancreatic and gastrointestinal functions probably by signaling through the G protein-coupled receptor NPY4R2. The polypeptide is Pancreatic polypeptide prohormone (PPY) (Ovis aries (Sheep)).